Here is a 236-residue protein sequence, read N- to C-terminus: Lipoarabinomannan carrier protein LprG (236 aa).

An N-terminal signal peptide occupies residues 1–25 (MQTRPRFAVQSLFAILATAAALVAG). A lipid anchor (N-palmitoyl cysteine) is attached at Cys-26. Residue Cys-26 is the site of S-diacylglycerol cysteine attachment.

Belongs to the LppX/LprAFG lipoprotein family. In terms of assembly, interacts with itself, Ag85A (MSMEG_6398), LppI (MSMEG_3851) and LppK (MSMEG_3904) in vivo.

The protein resides in the cell inner membrane. It is found in the secreted. It localises to the cell wall. Helps membrane protein MSMEG_3069/MSMEI_2992 (P55) transport triacylglycerides (TAG) across the inner cell membrane into the periplasm and probably ultimately to the outer membrane. Binds TAG in its hydrophobic cavity and transfers it between lipid bilayers. TAG probably regulates lipid metabolism and growth regulation and plays a structural role in the outer membrane. Also binds mannosides, lipoarabinomannan and lipomannan and various glycolipids in the same cavity. Required for MSMEG_3069/MSMEI_2992 export activity. Export of ethidium bromide by MSMEG_3069/MSMEI_2992 can be complemented by the equivalent operon from M.tuberculosis (lprG-Rv1410c). Involved in mycolylation. This Mycolicibacterium smegmatis (strain ATCC 700084 / mc(2)155) (Mycobacterium smegmatis) protein is Lipoarabinomannan carrier protein LprG.